Here is a 260-residue protein sequence, read N- to C-terminus: Triosephosphate isomerase (260 aa).

Asn11 to Lys13 is a binding site for substrate. The Electrophile role is filled by His103. Residue Glu175 is the Proton acceptor of the active site. Substrate is bound by residues Gly181, Ser220, and Gly241–Gly242.

Belongs to the triosephosphate isomerase family. In terms of assembly, homodimer.

It localises to the cytoplasm. The catalysed reaction is D-glyceraldehyde 3-phosphate = dihydroxyacetone phosphate. The protein operates within carbohydrate biosynthesis; gluconeogenesis. It participates in carbohydrate degradation; glycolysis; D-glyceraldehyde 3-phosphate from glycerone phosphate: step 1/1. Involved in the gluconeogenesis. Catalyzes stereospecifically the conversion of dihydroxyacetone phosphate (DHAP) to D-glyceraldehyde-3-phosphate (G3P). The polypeptide is Triosephosphate isomerase (Shewanella piezotolerans (strain WP3 / JCM 13877)).